Consider the following 407-residue polypeptide: Nicotinate phosphoribosyltransferase (407 aa).

At His-224 the chain carries Phosphohistidine; by autocatalysis.

It belongs to the NAPRTase family. Post-translationally, transiently phosphorylated on a His residue during the reaction cycle. Phosphorylation strongly increases the affinity for substrates and increases the rate of nicotinate D-ribonucleotide production. Dephosphorylation regenerates the low-affinity form of the enzyme, leading to product release.

It carries out the reaction nicotinate + 5-phospho-alpha-D-ribose 1-diphosphate + ATP + H2O = nicotinate beta-D-ribonucleotide + ADP + phosphate + diphosphate. Its pathway is cofactor biosynthesis; NAD(+) biosynthesis; nicotinate D-ribonucleotide from nicotinate: step 1/1. In terms of biological role, catalyzes the synthesis of beta-nicotinate D-ribonucleotide from nicotinate and 5-phospho-D-ribose 1-phosphate at the expense of ATP. This is Nicotinate phosphoribosyltransferase from Pseudomonas savastanoi pv. phaseolicola (strain 1448A / Race 6) (Pseudomonas syringae pv. phaseolicola (strain 1448A / Race 6)).